The following is a 438-amino-acid chain: Methyl-coenzyme M reductase subunit beta (438 aa).

Tyr-367 provides a ligand contact to coenzyme M. Gly-369 provides a ligand contact to coenzyme B.

Belongs to the methyl-coenzyme M reductase beta subunit family. In terms of assembly, MCR is a hexamer of two alpha, two beta, and two gamma chains, forming a dimer of heterotrimers. It depends on coenzyme F430 as a cofactor.

It is found in the cytoplasm. The enzyme catalyses coenzyme B + methyl-coenzyme M = methane + coenzyme M-coenzyme B heterodisulfide. It functions in the pathway one-carbon metabolism; methyl-coenzyme M reduction; methane from methyl-coenzyme M: step 1/1. Component of the methyl-coenzyme M reductase (MCR) I that catalyzes the reductive cleavage of methyl-coenzyme M (CoM-S-CH3 or 2-(methylthio)ethanesulfonate) using coenzyme B (CoB or 7-mercaptoheptanoylthreonine phosphate) as reductant which results in the production of methane and the mixed heterodisulfide of CoB and CoM (CoM-S-S-CoB). This is the final step in methanogenesis. This Methanothermus fervidus protein is Methyl-coenzyme M reductase subunit beta (mcrB).